Here is a 450-residue protein sequence, read N- to C-terminus: UDP-N-acetylmuramoylalanine--D-glutamate ligase (450 aa).

119 to 125 (GSNGKTT) provides a ligand contact to ATP.

This sequence belongs to the MurCDEF family.

Its subcellular location is the cytoplasm. The catalysed reaction is UDP-N-acetyl-alpha-D-muramoyl-L-alanine + D-glutamate + ATP = UDP-N-acetyl-alpha-D-muramoyl-L-alanyl-D-glutamate + ADP + phosphate + H(+). Its pathway is cell wall biogenesis; peptidoglycan biosynthesis. Cell wall formation. Catalyzes the addition of glutamate to the nucleotide precursor UDP-N-acetylmuramoyl-L-alanine (UMA). This is UDP-N-acetylmuramoylalanine--D-glutamate ligase from Streptococcus pneumoniae (strain P1031).